A 142-amino-acid chain; its full sequence is Large ribosomal subunit protein uL13 (142 aa).

The protein belongs to the universal ribosomal protein uL13 family. Part of the 50S ribosomal subunit.

Its function is as follows. This protein is one of the early assembly proteins of the 50S ribosomal subunit, although it is not seen to bind rRNA by itself. It is important during the early stages of 50S assembly. This is Large ribosomal subunit protein uL13 from Azotobacter vinelandii (strain DJ / ATCC BAA-1303).